We begin with the raw amino-acid sequence, 203 residues long: Orotate phosphoribosyltransferase (203 aa).

Residues arginine 94, lysine 98, histidine 100, and 120–128 (EDLISTGGS) each bind 5-phospho-alpha-D-ribose 1-diphosphate. Residue serine 124 participates in orotate binding.

The protein belongs to the purine/pyrimidine phosphoribosyltransferase family. PyrE subfamily. In terms of assembly, homodimer. Mg(2+) is required as a cofactor.

It catalyses the reaction orotidine 5'-phosphate + diphosphate = orotate + 5-phospho-alpha-D-ribose 1-diphosphate. It participates in pyrimidine metabolism; UMP biosynthesis via de novo pathway; UMP from orotate: step 1/2. Functionally, catalyzes the transfer of a ribosyl phosphate group from 5-phosphoribose 1-diphosphate to orotate, leading to the formation of orotidine monophosphate (OMP). The chain is Orotate phosphoribosyltransferase from Staphylococcus aureus (strain Mu50 / ATCC 700699).